Consider the following 118-residue polypeptide: Small ribosomal subunit protein uS13 (118 aa).

The tract at residues 94–118 is disordered; the sequence is SLPLRGQRTKTNARTRKGPRKAIKK.

The protein belongs to the universal ribosomal protein uS13 family. In terms of assembly, part of the 30S ribosomal subunit. Forms a loose heterodimer with protein S19. Forms two bridges to the 50S subunit in the 70S ribosome.

Located at the top of the head of the 30S subunit, it contacts several helices of the 16S rRNA. In the 70S ribosome it contacts the 23S rRNA (bridge B1a) and protein L5 of the 50S subunit (bridge B1b), connecting the 2 subunits; these bridges are implicated in subunit movement. Contacts the tRNAs in the A and P-sites. This chain is Small ribosomal subunit protein uS13, found in Pseudoalteromonas atlantica (strain T6c / ATCC BAA-1087).